Reading from the N-terminus, the 840-residue chain is MDKALKEVFDYSYRDYILSWYGNLSRDEGQLYHLLLEDFWEIARQLHHRLSHVDVVKVVCNDVVRTLLTHFCDLKAANARHEEQPRPFVLHACLRNSDDEVRFLQTCSRVLVFCLLPSKDVQSLSLRIMLAEILTTKVLKPVVELLSNPDYINQMLLAQLAYREQMNEHHKRAYTYAPSYEDFIKLINSNSDVEFLKQLRYQIVVEIIQATTISSFPQLKRHKGKETAAMKADLLRARNMKRYINQLTVAKKQCEKRIRILGGPAYDQQEDGALDEGEGPQSQKILQFEDILANTFYREHFGMYMERMDKRALISFWESVEHLKNANKNEIPQLVGEIYQNFFVESKEISVEKSLYKEIQQCLVGNKGIEVFYKIQEDVYETLKDRYYPSFIVSDLYEKLLIKEEEKHASQMISNKDEMGPRDEAGEEAVDDGTNQINEQASFAVNKLRELNEKLEYKRQALNSIQNAPKPDKKIVSKLKDEIILIEKERTDLQLHMARTDWWCENLGMWKASITSGEVTEENGEQLPCYFVMVSLQEVGGVETKNWTVPRRLSEFQNLHRKLSECVPSLKKVQLPSLSKLPFKSIDQKFMEKSKNQLNKFLQNLLSDERLCQSEALYAFLSPSPDYLKVIDVQGKKNSFSLSSFLERLPRDFFSHQEEETEEDSDLSDYGDDVDGRKDALAEPCFMLIGEIFELRGMFKWVRRTLIALVQVTFGRTINKQIRDTVSWIFSEQMLVYYINIFRDAFWPNGKLAPPTTIRSKEQSQETKQRAQQKLLENIPDMLQSLVGQQNARHGIIKIFNALQETRANKHLLYALMELLLIELCPELRVHLDQLKAGQV.

Positions 1-164 (MDKALKEVFD…MLLAQLAYRE (164 aa)) constitute a PXA domain. Residues 287–401 (QFEDILANTF…IVSDLYEKLL (115 aa)) enclose the RGS domain. The stretch at 434-499 (TNQINEQASF…RTDLQLHMAR (66 aa)) forms a coiled coil. One can recognise a PX domain in the interval 508 to 628 (GMWKASITSG…AFLSPSPDYL (121 aa)). At Ser-665 the chain carries Phosphoserine.

This sequence belongs to the sorting nexin family.

It localises to the endosome membrane. Functionally, may be involved in several stages of intracellular trafficking. This chain is Sorting nexin-25 (SNX25), found in Homo sapiens (Human).